The primary structure comprises 174 residues: MIEAQVGKRYAEAIYGIAEANNKVKELYDSLNIVMELYKGDKEFKNLVDHPLVKKEEKKEFINKVFSEFEKFSLDILCYLVEKNRLSYIRGVVAEYLKIYYTKNRIVDVEATFAIEPSEKQKAKLIEKLEKKTGKKVNLVIKINKAIIAGGIIKIGDEIIDGSVRRQLDTVARG.

Belongs to the ATPase delta chain family. As to quaternary structure, F-type ATPases have 2 components, F(1) - the catalytic core - and F(0) - the membrane proton channel. F(1) has five subunits: alpha(3), beta(3), gamma(1), delta(1), epsilon(1). F(0) has three main subunits: a(1), b(2) and c(10-14). The alpha and beta chains form an alternating ring which encloses part of the gamma chain. F(1) is attached to F(0) by a central stalk formed by the gamma and epsilon chains, while a peripheral stalk is formed by the delta and b chains.

It is found in the cell inner membrane. Its function is as follows. F(1)F(0) ATP synthase produces ATP from ADP in the presence of a proton or sodium gradient. F-type ATPases consist of two structural domains, F(1) containing the extramembraneous catalytic core and F(0) containing the membrane proton channel, linked together by a central stalk and a peripheral stalk. During catalysis, ATP synthesis in the catalytic domain of F(1) is coupled via a rotary mechanism of the central stalk subunits to proton translocation. This protein is part of the stalk that links CF(0) to CF(1). It either transmits conformational changes from CF(0) to CF(1) or is implicated in proton conduction. This chain is ATP synthase subunit delta, sodium ion specific, found in Ilyobacter tartaricus.